Reading from the N-terminus, the 732-residue chain is Eukaryotic translation initiation factor 3 subunit B (732 aa).

Positions 1 to 94 (MTTLESLKIE…LFIEMESVSA (94 aa)) are sufficient for interaction with HCR1 and TIF32. The sufficient for interaction with PIC8 stretch occupies residues 1–219 (MTTLESLKIE…GVTSWGGPNF (219 aa)). An RRM domain is found at 37-120 (NFLVVDGAPV…HRLLVNSLND (84 aa)). WD repeat units follow at residues 185–224 (ARKN…RLKR), 237–280 (PTEK…LMKT), 439–481 (EMKD…KFFA), and 507–554 (VDQQ…KTLN).

It belongs to the eIF-3 subunit B family. In terms of assembly, component of the eukaryotic translation initiation factor 3 (eIF-3) complex.

The protein resides in the cytoplasm. Its function is as follows. RNA-binding component of the eukaryotic translation initiation factor 3 (eIF-3) complex, which is involved in protein synthesis of a specialized repertoire of mRNAs and, together with other initiation factors, stimulates binding of mRNA and methionyl-tRNAi to the 40S ribosome. The eIF-3 complex specifically targets and initiates translation of a subset of mRNAs involved in cell proliferation. In Kluyveromyces lactis (strain ATCC 8585 / CBS 2359 / DSM 70799 / NBRC 1267 / NRRL Y-1140 / WM37) (Yeast), this protein is Eukaryotic translation initiation factor 3 subunit B.